The chain runs to 311 residues: Aspartate carbamoyltransferase catalytic subunit (311 aa).

Arg55 and Thr56 together coordinate carbamoyl phosphate. Lys85 contacts L-aspartate. The carbamoyl phosphate site is built by Arg106, His135, and Gln138. 2 residues coordinate L-aspartate: Arg168 and Arg230. 2 residues coordinate carbamoyl phosphate: Leu268 and Pro269.

It belongs to the aspartate/ornithine carbamoyltransferase superfamily. ATCase family. In terms of assembly, heterododecamer (2C3:3R2) of six catalytic PyrB chains organized as two trimers (C3), and six regulatory PyrI chains organized as three dimers (R2).

It carries out the reaction carbamoyl phosphate + L-aspartate = N-carbamoyl-L-aspartate + phosphate + H(+). The protein operates within pyrimidine metabolism; UMP biosynthesis via de novo pathway; (S)-dihydroorotate from bicarbonate: step 2/3. In terms of biological role, catalyzes the condensation of carbamoyl phosphate and aspartate to form carbamoyl aspartate and inorganic phosphate, the committed step in the de novo pyrimidine nucleotide biosynthesis pathway. The polypeptide is Aspartate carbamoyltransferase catalytic subunit (Citrobacter koseri (strain ATCC BAA-895 / CDC 4225-83 / SGSC4696)).